A 391-amino-acid chain; its full sequence is DNA-directed RNA polymerase I subunit RPA43 (391 aa).

2 disordered regions span residues 1–27 (MANW…SGGS) and 220–391 (QKQV…KKSK). Residues 288 to 299 (GRHKEKKKKKKR) are compositionally biased toward basic residues. Residues 289–353 (RHKEKKKKKK…RDKQQDSAEI (65 aa)) adopt a coiled-coil conformation. Residues 312–323 (MNNNSLQETALD) show a composition bias toward polar residues. Residues 336–345 (KEKKKKKKRD) are compositionally biased toward basic residues.

Belongs to the eukaryotic RPA43 RNA polymerase subunit family. As to quaternary structure, component of the RNA polymerase I (Pol I) complex consisting of at least 13 subunits.

Its subcellular location is the nucleus. The protein resides in the nucleolus. In terms of biological role, DNA-dependent RNA polymerase catalyzes the transcription of DNA into RNA using the four ribonucleoside triphosphates as substrates. Component of RNA polymerase I which synthesizes ribosomal RNA precursors. May be involved in recruitment of Pol I to rDNA promoters. In Danio rerio (Zebrafish), this protein is DNA-directed RNA polymerase I subunit RPA43.